The primary structure comprises 230 residues: 5'-methylthioadenosine/S-adenosylhomocysteine nucleosidase (230 aa).

The Proton acceptor role is filled by Glu12. Substrate is bound by residues Gly78, Ile153, and 174–175; that span reads ME. Asp198 serves as the catalytic Proton donor.

Belongs to the PNP/UDP phosphorylase family. MtnN subfamily.

The enzyme catalyses S-adenosyl-L-homocysteine + H2O = S-(5-deoxy-D-ribos-5-yl)-L-homocysteine + adenine. It catalyses the reaction S-methyl-5'-thioadenosine + H2O = 5-(methylsulfanyl)-D-ribose + adenine. It carries out the reaction 5'-deoxyadenosine + H2O = 5-deoxy-D-ribose + adenine. It functions in the pathway amino-acid biosynthesis; L-methionine biosynthesis via salvage pathway; S-methyl-5-thio-alpha-D-ribose 1-phosphate from S-methyl-5'-thioadenosine (hydrolase route): step 1/2. In terms of biological role, catalyzes the irreversible cleavage of the glycosidic bond in both 5'-methylthioadenosine (MTA) and S-adenosylhomocysteine (SAH/AdoHcy) to adenine and the corresponding thioribose, 5'-methylthioribose and S-ribosylhomocysteine, respectively. Also cleaves 5'-deoxyadenosine, a toxic by-product of radical S-adenosylmethionine (SAM) enzymes, into 5-deoxyribose and adenine. The sequence is that of 5'-methylthioadenosine/S-adenosylhomocysteine nucleosidase from Shewanella sediminis (strain HAW-EB3).